We begin with the raw amino-acid sequence, 431 residues long: UDP-N-acetylglucosamine 1-carboxyvinyltransferase (431 aa).

22–23 (KN) serves as a coordination point for phosphoenolpyruvate. Position 93 (arginine 93) interacts with UDP-N-acetyl-alpha-D-glucosamine. The Proton donor role is filled by cysteine 117. 2-(S-cysteinyl)pyruvic acid O-phosphothioketal is present on cysteine 117. UDP-N-acetyl-alpha-D-glucosamine is bound by residues aspartate 307 and valine 329.

It belongs to the EPSP synthase family. MurA subfamily.

It is found in the cytoplasm. The enzyme catalyses phosphoenolpyruvate + UDP-N-acetyl-alpha-D-glucosamine = UDP-N-acetyl-3-O-(1-carboxyvinyl)-alpha-D-glucosamine + phosphate. It functions in the pathway cell wall biogenesis; peptidoglycan biosynthesis. Cell wall formation. Adds enolpyruvyl to UDP-N-acetylglucosamine. The polypeptide is UDP-N-acetylglucosamine 1-carboxyvinyltransferase (Nitrosococcus oceani (strain ATCC 19707 / BCRC 17464 / JCM 30415 / NCIMB 11848 / C-107)).